We begin with the raw amino-acid sequence, 376 residues long: Queuine tRNA-ribosyltransferase (376 aa).

D93 (proton acceptor) is an active-site residue. Substrate-binding positions include 93 to 97 (DSGGF), D147, Q191, and G218. The tract at residues 249 to 255 (GVGKPED) is RNA binding. D268 functions as the Nucleophile in the catalytic mechanism. The interval 273–277 (TRNAR) is RNA binding; important for wobble base 34 recognition. 4 residues coordinate Zn(2+): C306, C308, C311, and H337.

It belongs to the queuine tRNA-ribosyltransferase family. Homodimer. Within each dimer, one monomer is responsible for RNA recognition and catalysis, while the other monomer binds to the replacement base PreQ1. Zn(2+) is required as a cofactor.

The enzyme catalyses 7-aminomethyl-7-carbaguanine + guanosine(34) in tRNA = 7-aminomethyl-7-carbaguanosine(34) in tRNA + guanine. The protein operates within tRNA modification; tRNA-queuosine biosynthesis. Functionally, catalyzes the base-exchange of a guanine (G) residue with the queuine precursor 7-aminomethyl-7-deazaguanine (PreQ1) at position 34 (anticodon wobble position) in tRNAs with GU(N) anticodons (tRNA-Asp, -Asn, -His and -Tyr). Catalysis occurs through a double-displacement mechanism. The nucleophile active site attacks the C1' of nucleotide 34 to detach the guanine base from the RNA, forming a covalent enzyme-RNA intermediate. The proton acceptor active site deprotonates the incoming PreQ1, allowing a nucleophilic attack on the C1' of the ribose to form the product. After dissociation, two additional enzymatic reactions on the tRNA convert PreQ1 to queuine (Q), resulting in the hypermodified nucleoside queuosine (7-(((4,5-cis-dihydroxy-2-cyclopenten-1-yl)amino)methyl)-7-deazaguanosine). This is Queuine tRNA-ribosyltransferase from Histophilus somni (strain 129Pt) (Haemophilus somnus).